A 132-amino-acid chain; its full sequence is Large ribosomal subunit protein eL8 (132 aa).

Position 8 is an N6-acetyllysine; alternate (K8). Residue K8 forms a Glycyl lysine isopeptide (Lys-Gly) (interchain with G-Cter in SUMO2); alternate linkage. K36 participates in a covalent cross-link: Glycyl lysine isopeptide (Lys-Gly) (interchain with G-Cter in SUMO2). K128 is modified (N6-acetyllysine).

It belongs to the eukaryotic ribosomal protein eL8 family. In terms of assembly, component of the large ribosomal subunit. Interacts with CRY1. Interacts with DICER1, AGO2, TARBP2, MOV10 and EIF6; they form a large RNA-induced silencing complex (RISC).

It is found in the cytoplasm. In terms of biological role, component of the large ribosomal subunit. The ribosome is a large ribonucleoprotein complex responsible for the synthesis of proteins in the cell. This chain is Large ribosomal subunit protein eL8 (RPL7A), found in Sus scrofa (Pig).